A 204-amino-acid chain; its full sequence is Pyrrolidone-carboxylate peptidase (204 aa).

Catalysis depends on residues glutamate 80, cysteine 142, and histidine 165.

The protein belongs to the peptidase C15 family. In terms of assembly, homotetramer.

The protein resides in the cytoplasm. The enzyme catalyses Release of an N-terminal pyroglutamyl group from a polypeptide, the second amino acid generally not being Pro.. Removes 5-oxoproline from various penultimate amino acid residues except L-proline. The sequence is that of Pyrrolidone-carboxylate peptidase from Lysinibacillus sphaericus (strain C3-41).